The primary structure comprises 219 residues: MTQQEMKKIAAQAALQFVKPDTIVGVGSGSTVNCFIDALASMKDQIKGAVAASKASEGRLRAIGIEVFNANEVSELDVYIDGADEITPQGAMIKGGGAALTREKIVSSLAKKFVCIVDGSKQVDVLGTTFPLPVEVIPMARSYVARQLVALGGSPEYREGVVTDNGNVILDVHNFHIIEPLKMEHTINNIAGVVTNGIFAQRYANVTIVGTPEGAKIIE.

Substrate-binding positions include 28–31 (SGST), 81–84 (DGAD), and 94–97 (KGGG). Glu103 serves as the catalytic Proton acceptor. A substrate-binding site is contributed by Lys121.

The protein belongs to the ribose 5-phosphate isomerase family. Homodimer.

The enzyme catalyses aldehydo-D-ribose 5-phosphate = D-ribulose 5-phosphate. Its pathway is carbohydrate degradation; pentose phosphate pathway; D-ribose 5-phosphate from D-ribulose 5-phosphate (non-oxidative stage): step 1/1. In terms of biological role, catalyzes the reversible conversion of ribose-5-phosphate to ribulose 5-phosphate. The protein is Ribose-5-phosphate isomerase A of Actinobacillus pleuropneumoniae serotype 3 (strain JL03).